The primary structure comprises 361 residues: Chorismate synthase (361 aa).

Arginine 48 and arginine 54 together coordinate NADP(+). FMN is bound by residues 125–127 (RSS), 240–241 (NA), glycine 286, 301–305 (KPTSS), and arginine 327.

It belongs to the chorismate synthase family. As to quaternary structure, homotetramer. The cofactor is FMNH2.

The enzyme catalyses 5-O-(1-carboxyvinyl)-3-phosphoshikimate = chorismate + phosphate. Its pathway is metabolic intermediate biosynthesis; chorismate biosynthesis; chorismate from D-erythrose 4-phosphate and phosphoenolpyruvate: step 7/7. Functionally, catalyzes the anti-1,4-elimination of the C-3 phosphate and the C-6 proR hydrogen from 5-enolpyruvylshikimate-3-phosphate (EPSP) to yield chorismate, which is the branch point compound that serves as the starting substrate for the three terminal pathways of aromatic amino acid biosynthesis. This reaction introduces a second double bond into the aromatic ring system. In Magnetococcus marinus (strain ATCC BAA-1437 / JCM 17883 / MC-1), this protein is Chorismate synthase.